A 338-amino-acid polypeptide reads, in one-letter code: Glycerol-3-phosphate dehydrogenase [NAD(P)+] (338 aa).

Positions 14, 15, 35, and 109 each coordinate NADPH. Residues Lys109, Gly138, and Thr140 each coordinate sn-glycerol 3-phosphate. Ala142 contacts NADPH. Positions 194, 247, 257, 258, and 259 each coordinate sn-glycerol 3-phosphate. The Proton acceptor role is filled by Lys194. NADPH is bound at residue Arg258. Residues Val282 and Glu284 each contribute to the NADPH site.

This sequence belongs to the NAD-dependent glycerol-3-phosphate dehydrogenase family.

The protein resides in the cytoplasm. It carries out the reaction sn-glycerol 3-phosphate + NAD(+) = dihydroxyacetone phosphate + NADH + H(+). It catalyses the reaction sn-glycerol 3-phosphate + NADP(+) = dihydroxyacetone phosphate + NADPH + H(+). The protein operates within membrane lipid metabolism; glycerophospholipid metabolism. Its function is as follows. Catalyzes the reduction of the glycolytic intermediate dihydroxyacetone phosphate (DHAP) to sn-glycerol 3-phosphate (G3P), the key precursor for phospholipid synthesis. This Shewanella sp. (strain MR-4) protein is Glycerol-3-phosphate dehydrogenase [NAD(P)+].